Reading from the N-terminus, the 137-residue chain is Small ribosomal subunit protein uS12 (137 aa).

The disordered stretch occupies residues 1–25 (MPTINQLVRQGRKSKTYKSDSPALS). A 3-methylthioaspartic acid modification is found at D102.

Belongs to the universal ribosomal protein uS12 family. In terms of assembly, part of the 30S ribosomal subunit. Contacts proteins S8 and S17. May interact with IF1 in the 30S initiation complex.

Its function is as follows. With S4 and S5 plays an important role in translational accuracy. Functionally, interacts with and stabilizes bases of the 16S rRNA that are involved in tRNA selection in the A site and with the mRNA backbone. Located at the interface of the 30S and 50S subunits, it traverses the body of the 30S subunit contacting proteins on the other side and probably holding the rRNA structure together. The combined cluster of proteins S8, S12 and S17 appears to hold together the shoulder and platform of the 30S subunit. The chain is Small ribosomal subunit protein uS12 from Finegoldia magna (strain ATCC 29328 / DSM 20472 / WAL 2508) (Peptostreptococcus magnus).